The primary structure comprises 271 residues: MPELPEVEVTRQGIAPHLVEQTVVDLVIRNASLRWPVPELAKQIIGQTIRQVRRRAKYLLIDTDAGTSIVHLGMSGSLRILPHDTPVEKHDHIDLVLANGRILRFNDPRRFGAWLWCQLPEEAHPLLEKLGPEPLTDAFNVNQLAAALAGKKKAIKLCLMDNHIVVGVGNIYANEALFAAGIHPEAEAGKIDIERLTVLVAEVKQILAHAIKQGGTTLKDFTNAEGKPGYFAQKLHVYGRGGETCTQCGNLLSEIRLGQRTTVFCGICQTR.

Proline 2 serves as the catalytic Schiff-base intermediate with DNA. Catalysis depends on glutamate 3, which acts as the Proton donor. Residue lysine 57 is the Proton donor; for beta-elimination activity of the active site. DNA-binding residues include histidine 90, arginine 109, and lysine 151. The segment at 236–270 adopts an FPG-type zinc-finger fold; that stretch reads HVYGRGGETCTQCGNLLSEIRLGQRTTVFCGICQT. Arginine 260 functions as the Proton donor; for delta-elimination activity in the catalytic mechanism.

This sequence belongs to the FPG family. Monomer. Zn(2+) is required as a cofactor.

It catalyses the reaction Hydrolysis of DNA containing ring-opened 7-methylguanine residues, releasing 2,6-diamino-4-hydroxy-5-(N-methyl)formamidopyrimidine.. The catalysed reaction is 2'-deoxyribonucleotide-(2'-deoxyribose 5'-phosphate)-2'-deoxyribonucleotide-DNA = a 3'-end 2'-deoxyribonucleotide-(2,3-dehydro-2,3-deoxyribose 5'-phosphate)-DNA + a 5'-end 5'-phospho-2'-deoxyribonucleoside-DNA + H(+). Involved in base excision repair of DNA damaged by oxidation or by mutagenic agents. Acts as a DNA glycosylase that recognizes and removes damaged bases. Has a preference for oxidized purines, such as 7,8-dihydro-8-oxoguanine (8-oxoG). Has AP (apurinic/apyrimidinic) lyase activity and introduces nicks in the DNA strand. Cleaves the DNA backbone by beta-delta elimination to generate a single-strand break at the site of the removed base with both 3'- and 5'-phosphates. This chain is Formamidopyrimidine-DNA glycosylase, found in Shewanella sp. (strain MR-4).